Reading from the N-terminus, the 334-residue chain is N,N'-diacetyllegionaminic acid synthase (334 aa).

Residues 282–334 form the AFP-like domain; that stretch reads SLVAKKDIKKGEIFSEGNLTTKRPANGISAMRYEEFLGKIATKNYKEDELIRE.

It carries out the reaction 2,4-diacetamido-2,4,6-trideoxy-alpha-D-mannopyranose + phosphoenolpyruvate + H2O = N,N-diacetyllegionaminate + phosphate. Functionally, involved in biosynthesis of legionaminic acid (5,7-diamino-3,5,7,9-tetradeoxy-D-glycero-D-galacto-non-2-ulosonic acid)(Leg), a sialic acid-like derivative that is incorporated into flagellin via O-linkage to Ser/Thr. Catalyzes the condensation of 2,4-diacetamido-2,4,6-trideoxymannose with phosphoenolpyruvate (PEP) to give N,N'-diacetyllegionaminic acid. In Campylobacter jejuni subsp. jejuni serotype O:2 (strain ATCC 700819 / NCTC 11168), this protein is N,N'-diacetyllegionaminic acid synthase (legI).